The primary structure comprises 180 residues: p-cumate 2,3-dioxygenase system, small oxygenase component (180 aa).

It belongs to the bacterial ring-hydroxylating dioxygenase beta subunit family. In terms of assembly, the p-cumate 2,3-dioxygenase multicomponent enzyme system is composed of an electron transfer component and a dioxygenase component (iron sulfur protein (ISP)). The electron transfer component is composed of a ferredoxin reductase (CmtAa) and a ferredoxin (CmtAd), and the dioxygenase component is formed of a large alpha subunit (CmtAb) and a small beta subunit (CmtAc).

Its pathway is aromatic compound metabolism; p-cumate degradation; acetaldehyde and pyruvate from p-cumate. Functionally, component of the p-cumate 2,3-dioxygenase multicomponent enzyme system which catalyzes the incorporation of both atoms of molecular oxygen into p-cumate to form cis-2,3-dihydroxy-2,3-dihydro-p-cumate. The beta subunit seems to have a structural role in the holoenzyme. Also able to catalyze the cis-dihydroxylation of indole-2-carboxylate and indole-3-carboxylate. This Pseudomonas putida (Arthrobacter siderocapsulatus) protein is p-cumate 2,3-dioxygenase system, small oxygenase component.